Consider the following 443-residue polypeptide: Glucose-6-phosphate isomerase (443 aa).

The active-site Proton donor is E285. Active-site residues include H306 and K420.

This sequence belongs to the GPI family.

It is found in the cytoplasm. The catalysed reaction is alpha-D-glucose 6-phosphate = beta-D-fructose 6-phosphate. It participates in carbohydrate biosynthesis; gluconeogenesis. It functions in the pathway carbohydrate degradation; glycolysis; D-glyceraldehyde 3-phosphate and glycerone phosphate from D-glucose: step 2/4. Functionally, catalyzes the reversible isomerization of glucose-6-phosphate to fructose-6-phosphate. The protein is Glucose-6-phosphate isomerase of Staphylococcus epidermidis (strain ATCC 12228 / FDA PCI 1200).